The following is a 380-amino-acid chain: Crotonobetainyl-CoA reductase (380 aa).

It belongs to the acyl-CoA dehydrogenase family. Homotetramer. The cofactor is FAD.

The protein localises to the cytoplasm. The catalysed reaction is 4-(trimethylamino)butanoyl-CoA + oxidized [electron-transfer flavoprotein] + H(+) = crotonobetainyl-CoA + reduced [electron-transfer flavoprotein]. The protein operates within amine and polyamine metabolism; carnitine metabolism. Functionally, catalyzes the reduction of crotonobetainyl-CoA to gamma-butyrobetainyl-CoA. This chain is Crotonobetainyl-CoA reductase, found in Citrobacter koseri (strain ATCC BAA-895 / CDC 4225-83 / SGSC4696).